The sequence spans 226 residues: Orotate phosphoribosyltransferase 1 (226 aa).

A 5-phospho-alpha-D-ribose 1-diphosphate-binding site is contributed by Lys30. Residue 38–39 participates in orotate binding; it reads FF. 5-phospho-alpha-D-ribose 1-diphosphate-binding positions include 76–77, Arg106, Lys107, Lys110, His112, and 132–140; these read YK and DDVMTAGTA. The orotate site is built by Thr136 and Arg164. 2 positions are modified to phosphoserine: Ser213 and Ser225.

Belongs to the purine/pyrimidine phosphoribosyltransferase family. PyrE subfamily. As to quaternary structure, homodimer.

It carries out the reaction orotidine 5'-phosphate + diphosphate = orotate + 5-phospho-alpha-D-ribose 1-diphosphate. It functions in the pathway pyrimidine metabolism; UMP biosynthesis via de novo pathway; UMP from orotate: step 1/2. Functionally, catalyzes the transfer of a ribosyl phosphate group from 5-phosphoribose 1-diphosphate to orotate, leading to the formation of orotidine monophosphate (OMP). This Saccharomyces cerevisiae (strain ATCC 204508 / S288c) (Baker's yeast) protein is Orotate phosphoribosyltransferase 1 (URA5).